Consider the following 30-residue polypeptide: Thylakoid lumenal 17 kDa protein (30 aa).

The protein localises to the plastid. It is found in the chloroplast thylakoid lumen. In Spinacia oleracea (Spinach), this protein is Thylakoid lumenal 17 kDa protein.